The sequence spans 357 residues: Probable cinnamyl alcohol dehydrogenase 2 (357 aa).

Cys47 lines the Zn(2+) pocket. Ser49 contacts NADP(+). Zn(2+)-binding residues include His69, Glu70, Cys100, Cys103, Cys106, Cys114, and Cys163. Residues Thr167, 188–193, 211–216, Thr251, Gly275, and 298–300 contribute to the NADP(+) site; these read GLGGVG, SSSNKK, and SFI.

It belongs to the zinc-containing alcohol dehydrogenase family. Homodimer. The cofactor is Zn(2+). The N-terminus is blocked.

The enzyme catalyses (E)-cinnamyl alcohol + NADP(+) = (E)-cinnamaldehyde + NADPH + H(+). The catalysed reaction is (E)-coniferol + NADP(+) = (E)-coniferaldehyde + NADPH + H(+). It carries out the reaction (E)-sinapyl alcohol + NADP(+) = (E)-sinapaldehyde + NADPH + H(+). It catalyses the reaction (E)-4-coumaroyl alcohol + NADP(+) = (E)-4-coumaraldehyde + NADPH + H(+). The enzyme catalyses (E)-caffeyl alcohol + NADP(+) = (E)-caffeyl aldehyde + NADPH + H(+). It participates in aromatic compound metabolism; phenylpropanoid biosynthesis. Its function is as follows. Involved in lignin biosynthesis. Catalyzes the final step specific for the production of lignin monomers. Catalyzes the NADPH-dependent reduction of coniferaldehyde, 5-hydroxyconiferaldehyde, sinapaldehyde, 4-coumaraldehyde and caffeyl aldehyde to their respective alcohols. The polypeptide is Probable cinnamyl alcohol dehydrogenase 2 (CAD19) (Nicotiana tabacum (Common tobacco)).